Consider the following 338-residue polypeptide: MIERNWNELIRPEKPQIETGADATRKARIVAEPLERGFGVTLGNALRRVLLSSLQGAAVTAIQIDGVVHEFSSLEGVREDVVDIVLNIKQLAVRMHAEGPKRMTLRATGPGPVTAGQIETPADIEILNPDHVLCTLDDGASVRMEFTVNNGKGYVPADRNRPEDAPIGLIAVDALYSPVKRVAYRVEPTRQGQSLDYDKLILEVETNGAVTPVDAVAYAARILQDQLQIFITFEEPKAKSADESKPELPFNPALLKKVDELELSVRSANCLKNDNIVYIGDLIQKTEAEMLRTPNFGRKSLNEIKEVLAGMGLHLGMDVPNWPPENIEDLAKKFEDQI.

The alpha N-terminal domain (alpha-NTD) stretch occupies residues 1–234; that stretch reads MIERNWNELI…DQLQIFITFE (234 aa). Positions 250–338 are alpha C-terminal domain (alpha-CTD); sequence FNPALLKKVD…DLAKKFEDQI (89 aa).

The protein belongs to the RNA polymerase alpha chain family. Homodimer. The RNAP catalytic core consists of 2 alpha, 1 beta, 1 beta' and 1 omega subunit. When a sigma factor is associated with the core the holoenzyme is formed, which can initiate transcription.

It catalyses the reaction RNA(n) + a ribonucleoside 5'-triphosphate = RNA(n+1) + diphosphate. Functionally, DNA-dependent RNA polymerase catalyzes the transcription of DNA into RNA using the four ribonucleoside triphosphates as substrates. The chain is DNA-directed RNA polymerase subunit alpha from Caulobacter vibrioides (strain ATCC 19089 / CIP 103742 / CB 15) (Caulobacter crescentus).